A 158-amino-acid polypeptide reads, in one-letter code: Nuclear cap-binding protein subunit 2 (158 aa).

Residues Y17, Y40, 109-113 (RADWD), 120-124 (RQYGR), and 130-131 (QV) contribute to the mRNA site. One can recognise an RRM domain in the interval 37-115 (CTLYVGNLSY…RVIRADWDAG (79 aa)). A disordered region spans residues 123–158 (GRGKHGGQVRDEYRKDYDPERGGYNRAIAQKGGDRQ). Basic and acidic residues predominate over residues 130-145 (QVRDEYRKDYDPERGG).

Belongs to the RRM NCBP2 family. As to quaternary structure, component of the nuclear cap-binding complex (CBC), a heterodimer composed of ncbp-1 and ncbp-2 that interacts with m7GpppG-capped RNA.

The protein resides in the nucleus. Functionally, component of the cap-binding complex (CBC), which binds co-transcriptionally to the 5' cap of pre-mRNAs and is involved in various processes such as pre-mRNA splicing and RNA-mediated gene silencing (RNAi). The CBC complex is involved in miRNA-mediated RNA interference and is required for primary microRNAs (miRNAs) processing. In the CBC complex, ncbp-2 recognizes and binds capped RNAs (m7GpppG-capped RNA) but requires ncbp-1 to stabilize the movement of its N-terminal loop and lock the CBC into a high affinity cap-binding state with the cap structure. The sequence is that of Nuclear cap-binding protein subunit 2 (ncbp-2) from Caenorhabditis elegans.